We begin with the raw amino-acid sequence, 309 residues long: MEKYEKLEKVGEGTYGKVYKAMEKGTGKLVALKKTRLEMDEEGIPPTALREISLLQMLSTSIYVVRLLCVEHVHQPSTKSQSTKSNLYLVFEYLDTDLKKFIDSYRKGPNPKPLEPFLIQKLMFQLCKGVAHCHSHGVLHRDLKPQNLLLVKDKELLKIADLGLGRAFTVPLKSYTHEIVTLWYRAPEVLLGSTHYSTGVDMWSVGCIFAEMVRRQALFPGDSEFQQLLHIFRLLGTPTEQQWPGVSTLRDWHVYPKWEPQDLTLAVPSLSPQGVDLLTKMLKYNPAERISAKTALDHPYFDSLDKSQF.

A Protein kinase domain is found at 4–301 (YEKLEKVGEG…AKTALDHPYF (298 aa)). ATP-binding positions include 10–18 (VGEGTYGKV) and lysine 33. Tyrosine 15 carries the phosphotyrosine modification. The active-site Proton acceptor is the aspartate 142. At threonine 176 the chain carries Phosphothreonine; by CAK.

The protein belongs to the protein kinase superfamily. CMGC Ser/Thr protein kinase family. CDC2/CDKX subfamily. In terms of assembly, interacts with CKS1. Interacts with CYCU3-1. Interacts with SIM, SMR1 and SMR2. In terms of tissue distribution, highly expressed in guard cells and stomatal precursor cells of cotyledons. Expressed in roots, stems, flowers and siliques.

The protein resides in the nucleus. The catalysed reaction is L-seryl-[protein] + ATP = O-phospho-L-seryl-[protein] + ADP + H(+). The enzyme catalyses L-threonyl-[protein] + ATP = O-phospho-L-threonyl-[protein] + ADP + H(+). It carries out the reaction [DNA-directed RNA polymerase] + ATP = phospho-[DNA-directed RNA polymerase] + ADP + H(+). With respect to regulation, phosphorylation at Thr-14 or Tyr-15 inactivates the enzyme, while phosphorylation at Thr-176 activates it. Functionally, may control G2/M (mitosis) phase progression. Plays a role in regulating seedling growth in darkness via regulation of hypocotyl cell elongation and cotyledon cell development. Plays a role in stomatal development. Required to suppress endoreduplication. Together with CDKB1-2, promotes both the last division in the stomatal cell lineage as well as the number of stomata. In collaboration with MYB124 and MYB88, restrict the G1/S transition and chloroplast and nuclear number during stomatal formation, and normally maintain fate and developmental progression throughout the stomatal cell lineage. In Arabidopsis thaliana (Mouse-ear cress), this protein is Cyclin-dependent kinase B1-1 (CDKB1-1).